The chain runs to 206 residues: LexA repressor (206 aa).

Positions 28-48 form a DNA-binding region, H-T-H motif; the sequence is RAEIASELGFKSANAAEEHLK. Active-site for autocatalytic cleavage activity residues include S122 and K160.

Belongs to the peptidase S24 family. In terms of assembly, homodimer.

The enzyme catalyses Hydrolysis of Ala-|-Gly bond in repressor LexA.. In terms of biological role, represses a number of genes involved in the response to DNA damage (SOS response), including recA and lexA. In the presence of single-stranded DNA, RecA interacts with LexA causing an autocatalytic cleavage which disrupts the DNA-binding part of LexA, leading to derepression of the SOS regulon and eventually DNA repair. In Tolumonas auensis (strain DSM 9187 / NBRC 110442 / TA 4), this protein is LexA repressor.